A 478-amino-acid chain; its full sequence is Glycogen synthase (478 aa).

K15 is an ADP-alpha-D-glucose binding site.

Belongs to the glycosyltransferase 1 family. Bacterial/plant glycogen synthase subfamily.

It catalyses the reaction [(1-&gt;4)-alpha-D-glucosyl](n) + ADP-alpha-D-glucose = [(1-&gt;4)-alpha-D-glucosyl](n+1) + ADP + H(+). Its pathway is glycan biosynthesis; glycogen biosynthesis. In terms of biological role, synthesizes alpha-1,4-glucan chains using ADP-glucose. The sequence is that of Glycogen synthase from Clostridium botulinum (strain Eklund 17B / Type B).